A 108-amino-acid polypeptide reads, in one-letter code: Large ribosomal subunit protein P2A (108 aa).

A disordered region spans residues 62 to 108 (LSSVPSGAPAAAAGGASAAAGGEATEEAAEEEAAEESDDDMSFGLFD). The span at 68-84 (GAPAAAAGGASAAAGGE) shows a compositional bias: low complexity. Over residues 85–102 (ATEEAAEEEAAEESDDDM) the composition is skewed to acidic residues. Ser98 bears the Phosphoserine mark.

Belongs to the eukaryotic ribosomal protein P1/P2 family.

Plays an important role in the elongation step of protein synthesis. This is Large ribosomal subunit protein P2A (RPP2A) from Candida albicans (Yeast).